Here is a 319-residue protein sequence, read N- to C-terminus: Methionyl-tRNA formyltransferase (319 aa).

112–115 (SILP) lines the (6S)-5,6,7,8-tetrahydrofolate pocket.

Belongs to the Fmt family.

It catalyses the reaction L-methionyl-tRNA(fMet) + (6R)-10-formyltetrahydrofolate = N-formyl-L-methionyl-tRNA(fMet) + (6S)-5,6,7,8-tetrahydrofolate + H(+). Its function is as follows. Attaches a formyl group to the free amino group of methionyl-tRNA(fMet). The formyl group appears to play a dual role in the initiator identity of N-formylmethionyl-tRNA by promoting its recognition by IF2 and preventing the misappropriation of this tRNA by the elongation apparatus. This chain is Methionyl-tRNA formyltransferase, found in Shewanella denitrificans (strain OS217 / ATCC BAA-1090 / DSM 15013).